Reading from the N-terminus, the 462-residue chain is tRNA modification GTPase MnmE (462 aa).

3 residues coordinate (6S)-5-formyl-5,6,7,8-tetrahydrofolate: Arg-27, Glu-89, and Arg-128. The region spanning 224–383 (GLATAIVGRP…LEAQIAKLFF (160 aa)) is the TrmE-type G domain. Asn-234 provides a ligand contact to K(+). Residues 234 to 239 (NVGKSS), 253 to 259 (TDVAGTT), and 278 to 281 (DTAG) contribute to the GTP site. Ser-238 contacts Mg(2+). 3 residues coordinate K(+): Thr-253, Val-255, and Thr-258. Thr-259 is a binding site for Mg(2+). A (6S)-5-formyl-5,6,7,8-tetrahydrofolate-binding site is contributed by Lys-462.

This sequence belongs to the TRAFAC class TrmE-Era-EngA-EngB-Septin-like GTPase superfamily. TrmE GTPase family. Homodimer. Heterotetramer of two MnmE and two MnmG subunits. Requires K(+) as cofactor.

It localises to the cytoplasm. Functionally, exhibits a very high intrinsic GTPase hydrolysis rate. Involved in the addition of a carboxymethylaminomethyl (cmnm) group at the wobble position (U34) of certain tRNAs, forming tRNA-cmnm(5)s(2)U34. This is tRNA modification GTPase MnmE from Latilactobacillus sakei subsp. sakei (strain 23K) (Lactobacillus sakei subsp. sakei).